The sequence spans 272 residues: Putative pyruvate, phosphate dikinase regulatory protein (272 aa).

151 to 158 (GISRTSKT) contacts ADP.

The protein belongs to the pyruvate, phosphate/water dikinase regulatory protein family. PDRP subfamily.

The catalysed reaction is N(tele)-phospho-L-histidyl/L-threonyl-[pyruvate, phosphate dikinase] + ADP = N(tele)-phospho-L-histidyl/O-phospho-L-threonyl-[pyruvate, phosphate dikinase] + AMP + H(+). It carries out the reaction N(tele)-phospho-L-histidyl/O-phospho-L-threonyl-[pyruvate, phosphate dikinase] + phosphate + H(+) = N(tele)-phospho-L-histidyl/L-threonyl-[pyruvate, phosphate dikinase] + diphosphate. Functionally, bifunctional serine/threonine kinase and phosphorylase involved in the regulation of the pyruvate, phosphate dikinase (PPDK) by catalyzing its phosphorylation/dephosphorylation. This Staphylococcus aureus (strain USA300) protein is Putative pyruvate, phosphate dikinase regulatory protein.